A 189-amino-acid chain; its full sequence is MKKIGVLGLQGAISEHLDKLSKIPNVEPFSLKYKEEIDTIDGLIIPGGESTAIGRLLSDFNLTEPLKTRVNAGMPVWGTCAGMIILAKTITNDRRRHLEVMDINVMRNGYGRQLNSFTTEVSLAKVSSDKIPLVFIRAPYVVEVAPNVEVLLRVDENIVACRQDNMLATSFHPELTEDLSFHRYFAEMI.

48–50 (GES) is a binding site for L-glutamine. Cys80 functions as the Nucleophile in the catalytic mechanism. Residues Arg107 and 136–137 (IR) contribute to the L-glutamine site. Residues His172 and Glu174 each act as charge relay system in the active site.

Belongs to the glutaminase PdxT/SNO family. In the presence of PdxS, forms a dodecamer of heterodimers. Only shows activity in the heterodimer.

It carries out the reaction aldehydo-D-ribose 5-phosphate + D-glyceraldehyde 3-phosphate + L-glutamine = pyridoxal 5'-phosphate + L-glutamate + phosphate + 3 H2O + H(+). The catalysed reaction is L-glutamine + H2O = L-glutamate + NH4(+). It functions in the pathway cofactor biosynthesis; pyridoxal 5'-phosphate biosynthesis. In terms of biological role, catalyzes the hydrolysis of glutamine to glutamate and ammonia as part of the biosynthesis of pyridoxal 5'-phosphate. The resulting ammonia molecule is channeled to the active site of PdxS. The sequence is that of Pyridoxal 5'-phosphate synthase subunit PdxT from Ruminiclostridium cellulolyticum (strain ATCC 35319 / DSM 5812 / JCM 6584 / H10) (Clostridium cellulolyticum).